The sequence spans 1265 residues: MVKISEIARTSTFAWSSKNLPLLAAGTVAGAVDINFSSSATLELWDIFSPTNKTEPIFSATVDNRFYALAWSKPFEGRPQGLLAGAFENGTVEFWDADVLIKTKDLAKASVHKSNKHTGAVKSLQFNPIQNHVLVTGGSNGQIFIWDTKTFSEPFAPGQAMTPMDEITSVSWNNSVSHILASTGNGGYTSIWDLKTKREVLHLSYTGAGGRANFSYVSWHPSQSTKLITASDNDSCPLILTWDLRNSNAPEKILEGHKKGVLSLDWCKQDPTLLLSSGKDNSTFLWNPIEGIKLGEYPTTANWAFETKFAPAAPDIFATASFDGKVVVQTIQDTSPSVSTKVASTDDNEFWSELSTTETQQPVFEVKQAPNWLKNPSNVSFGFGSKLVIINTDSSGKSTVKVDKFVAKGQEKTEKLFKDLKNDNYSSLIQDKLEGETVNENNKSDWEVLKRLSETGKESLFEDANNDEKEATSPETKKENGEDDFFEHLGNGETAKKEEVFVPEGNFKIFTNNENEDSKKLINLILRNKTEEAVSSCLEQKKLVEALVLALDGSDDVKQQVKNAYFKKNKENNLSRVIYNASTKNVTDLVAHANVENWKEVAVGISSFTTDSSEYNSKMSELGDRILKAKDGKRNDAVVCYLAGGALDKISNLWLQELPDYESELLSLKSEEITSPSDARLQALTNFVEKVATYRYITKSTGEFSGPMVEPLAKAILEFVNLVAGSGDFDLANKFLQLLPSEFSGTEKERILKATSKAVEPASAVKSSANAKIAKPASSSGQTRASINAVPAPAYAPPVQAPPVQAPQPPLVQQQQQQQQQQQPNRYGYAQPTYAGAAPKTNPYARTNPYAPSNNIYKPASPVATPSSLSGTTSGVPPPPPKASYKHETEGWNDLPDTFKAKTAAPRRAAAAATPPVSTPTPVSAPAFGSPGQPPSAPSQPGSVGSVSSAGYPKKTFSATNVLPPPPKSISRSTSRTTVPTSSTVPASPKPTPVSNKYAPAVTSDASQPPSSGFASPTLNSSPRLAKNPYAPSVTEQLPPKISYATPPAHHLANNGPSTPSYAPPKNPYAVPPSTSVSHAGIAPPPPAPKLGSAAPPPPQPFGSSMSMPVQPAFNGVPPPPPPVGRAVSTPAAAKIEQPPAREPELPVQSKHPKGDRTHIPENSLPIYNSLTNVLEAIKPNIPEKYAKHGTDMEQRLNILFDHLNNEEISNGVIELLLKVATSLESKDFANATAVNLQIATEHSDEIGNWHTGLKRLITMAEAMY.

WD repeat units lie at residues 6–46, 61–105, 116–156, 162–202, 209–252, 256–296, and 299–339; these read EIAR…ELWD, TVDN…KTKD, KHTG…EPFA, TPMD…EVLH, GGRA…APEK, GHKK…KLGE, and TTAN…PSVS. One copy of the WD 8; interaction with SEC13 repeat lies at 380-403; it reads SFGFGSKLVIINTDSSGKSTVKVD. Positions 457-480 are enriched in basic and acidic residues; that stretch reads KESLFEDANNDEKEATSPETKKEN. Disordered stretches follow at residues 457-485, 765-784, and 793-1163; these read KESL…EDDF, VKSS…GQTR, and PAYA…IPEN. The segment covering 794 to 810 has biased composition (pro residues); sequence AYAPPVQAPPVQAPQPP. 5 stretches are compositionally biased toward low complexity: residues 811–824, 865–875, 901–931, 939–951, and 969–987; these read LVQQ…QQQP, TPSSLSGTTSG, AKTA…FGSP, SQPG…SSAG, and SISR…TVPA. A compositionally biased stretch (polar residues) spans 1004–1023; that stretch reads SDASQPPSSGFASPTLNSSP. Pro residues-rich tracts occupy residues 1062–1071 and 1083–1101; these read YAPPKNPYAV and APPP…PPQP.

This sequence belongs to the WD repeat SEC31 family. As to quaternary structure, the COPII coat is composed of at least 5 proteins: the SEC23/24 complex, the SEC13/31 complex, and the protein SAR1. SEC13 and SEC31 make a 2:2 tetramer that forms the edge element of the COPII outer coat. The tetramer self-assembles in multiple copies to form the complete polyhedral cage. Interacts (via WD 8) with SEC13.

It is found in the cytoplasmic vesicle. The protein localises to the COPII-coated vesicle membrane. It localises to the endoplasmic reticulum membrane. In terms of biological role, component of the coat protein complex II (COPII) which promotes the formation of transport vesicles from the endoplasmic reticulum (ER). The coat has two main functions, the physical deformation of the endoplasmic reticulum membrane into vesicles and the selection of cargo molecules. The protein is Protein transport protein SEC31 (PGA63) of Candida albicans (strain SC5314 / ATCC MYA-2876) (Yeast).